The following is a 139-amino-acid chain: Large-conductance mechanosensitive channel (139 aa).

Transmembrane regions (helical) follow at residues Val14–Leu34 and Gly81–Val101.

The protein belongs to the MscL family. As to quaternary structure, homopentamer.

It is found in the cell membrane. Channel that opens in response to stretch forces in the membrane lipid bilayer. May participate in the regulation of osmotic pressure changes within the cell. The chain is Large-conductance mechanosensitive channel from Chloroflexus aurantiacus (strain ATCC 29366 / DSM 635 / J-10-fl).